A 589-amino-acid chain; its full sequence is Proline--tRNA ligase (589 aa).

The protein belongs to the class-II aminoacyl-tRNA synthetase family. ProS type 1 subfamily. In terms of assembly, homodimer.

The protein resides in the cytoplasm. The catalysed reaction is tRNA(Pro) + L-proline + ATP = L-prolyl-tRNA(Pro) + AMP + diphosphate. Catalyzes the attachment of proline to tRNA(Pro) in a two-step reaction: proline is first activated by ATP to form Pro-AMP and then transferred to the acceptor end of tRNA(Pro). As ProRS can inadvertently accommodate and process non-cognate amino acids such as alanine and cysteine, to avoid such errors it has two additional distinct editing activities against alanine. One activity is designated as 'pretransfer' editing and involves the tRNA(Pro)-independent hydrolysis of activated Ala-AMP. The other activity is designated 'posttransfer' editing and involves deacylation of mischarged Ala-tRNA(Pro). The misacylated Cys-tRNA(Pro) is not edited by ProRS. The sequence is that of Proline--tRNA ligase from Gloeobacter violaceus (strain ATCC 29082 / PCC 7421).